We begin with the raw amino-acid sequence, 60 residues long: Metallothionein (60 aa).

The tract at residues 1–28 is beta; that stretch reads MDPCECSKGGTCNCGGSCTCTNCSCTTC. A divalent metal cation-binding residues include C4, C6, C12, C14, C18, C20, C23, C25, C28, C32, C33, C35, C36, C40, C43, C47, C49, C54, C58, and C59. An alpha region spans residues 29–60; the sequence is KKSCCPCCPSGCPKCASGCVCKGKTCDAACCQ.

Belongs to the metallothionein superfamily. Type 1 family.

Its function is as follows. Metallothioneins have a high content of cysteine residues that bind various heavy metals. This chain is Metallothionein (mt), found in Perca fluviatilis (European perch).